The primary structure comprises 120 residues: Flagellar protein FliT (120 aa).

Residues 1–50 are required for homodimerization; sequence MERHQHLLSEYQQILTLSEQMLMLATVENWNTLVDLEMTYLKAVENTANI. Positions 60 to 98 are fliD binding; that stretch reads LQELLRQKLRSILENEIEIKRLLQRRLDKLSELVGQSTR.

This sequence belongs to the FliT family. As to quaternary structure, homodimer. Interacts with FliD and FlhC.

The protein localises to the cytoplasm. The protein resides in the cytosol. In terms of biological role, dual-function protein that regulates the transcription of class 2 flagellar operons and that also acts as an export chaperone for the filament-capping protein FliD. As a transcriptional regulator, acts as an anti-FlhDC factor; it directly binds FlhC, thus inhibiting the binding of the FlhC/FlhD complex to class 2 promoters, resulting in decreased expression of class 2 flagellar operons. As a chaperone, effects FliD transition to the membrane by preventing its premature polymerization, and by directing it to the export apparatus. In Yersinia pestis (strain Pestoides F), this protein is Flagellar protein FliT.